Consider the following 300-residue polypeptide: Acetaldehyde dehydrogenase 1 (300 aa).

11-14 lines the NAD(+) pocket; sequence SGNI. Cysteine 126 functions as the Acyl-thioester intermediate in the catalytic mechanism. Residues 157-165 and asparagine 276 each bind NAD(+); that span reads SAGPGTRAN.

This sequence belongs to the acetaldehyde dehydrogenase family.

The enzyme catalyses acetaldehyde + NAD(+) + CoA = acetyl-CoA + NADH + H(+). This is Acetaldehyde dehydrogenase 1 from Rhodococcus erythropolis (strain PR4 / NBRC 100887).